Here is a 93-residue protein sequence, read N- to C-terminus: Alpha-conotoxin RVIIIA (93 aa).

Residues 1–20 form the signal peptide; that stretch reads MMSKMGAMFVLLLLFTLASS. The propeptide occupies 21–46; sequence QQEGDVQARKTHPKREFQRILLRSGR. 4-carboxyglutamate is present on residues Glu63 and Glu68.

In terms of processing, contains 5 disulfide bonds. In terms of tissue distribution, expressed by the venom duct.

The protein resides in the secreted. Alpha-conotoxins act on postsynaptic membranes, they bind to the nicotinic acetylcholine receptors (nAChR) and thus inhibit them. This toxin provokes a nearly complete and slowly reversible inhibition of both the human adult (alpha-1-beta-1-epsilon-delta (CHRNA1-CHRNB1-CHRND-CHRNE)) and human fetal (alpha-1-beta-1-gamma-delta (CHRNA1-CHRNB1-CHRNG-CHRND)) neuromuscular nAChRs. It also reversibly blocks the neuromuscular alpha-7/CHRNA7 nAChR, the alpha-3-beta-2 (CHRNA3-CHRNB2) nAChR, the chimeric alpha-6 or -3/beta-3 or -2 (CHRNA6/CHRNA3-CHRNB2-CHRNB3) nAChR and with a low potency the alpha-4-beta-2 (CHRNA4-CHRNB2) nAChR. In addition, the toxin also inhibits the alpha-9-alpha-10 (CHRNA9-CHRNA10) nAChR with a high potency (IC(50)=187 nM). The sequence is that of Alpha-conotoxin RVIIIA from Conus radiatus (Rayed cone).